The following is a 290-amino-acid chain: Zinc finger protein-like 1 homolog (290 aa).

A B box-type; degenerate zinc finger spans residues 1–43 (MGLCKCPKRQVTTQFCFEHRVNVCENCMVVNHTKCTVQSYIQW). Residues 53-101 (CPLCGSPLDNEDCVRLICYHVFHWKCLNAKQQSLPANTAPGGHTCPTCS) form an RING-type; atypical zinc finger. Positions 156-168 (NGNTFASSMSQTR) are enriched in polar residues. Residues 156–175 (NGNTFASSMSQTRSNERPES) form a disordered region. The chain crosses the membrane as a helical span at residues 249-269 (WFLVLGGCIGFVCIIYVLATL).

It belongs to the ZFPL1 family.

The protein localises to the membrane. This is Zinc finger protein-like 1 homolog from Aedes aegypti (Yellowfever mosquito).